The chain runs to 614 residues: Leucine-rich repeat protein soc-2 homolog (614 aa).

2 disordered regions span residues 1–29 (MNLC…SSGP) and 44–79 (NSGG…PNLT). LRR repeat units lie at residues 134–155 (GIKR…VREC), 157–178 (HLTE…IGCL), 180–201 (NLRN…LKHC), 203–224 (QLKV…IYRL), 226–247 (SLTT…LRQL), 249–270 (NLTM…IGAL), 272–293 (NLTT…IGNC), 295–316 (NLSA…IGNL), 318–340 (SLVR…KNCK), 341–362 (SMDE…MLAS), 365–386 (ALTT…GPAQ), 389–410 (NVYS…IFSR), 413–434 (GLTK…VGTW), 436–457 (NMVE…IMNL), 459–480 (NLEI…IGNL), 482–503 (KLRI…IGLL), 505–526 (ELQR…IGHL), 528–549 (NLTH…IGSL), 551–573 (SLEN…LALC), and 575–596 (NLKY…IQAG).

Belongs to the SHOC2 family.

Its function is as follows. Acts as a Ras effector and participates in MAPK pathway activation. Probably acts as a regulatory subunit of protein phosphatase that specifically dephosphorylates Raf kinase and stimulate Raf activity at specialized signaling complexes upon Ras activation. The sequence is that of Leucine-rich repeat protein soc-2 homolog (Sur-8) from Drosophila virilis (Fruit fly).